Reading from the N-terminus, the 111-residue chain is Nucleoid-associated protein LBA0378 (111 aa).

Belongs to the YbaB/EbfC family. Homodimer.

The protein resides in the cytoplasm. Its subcellular location is the nucleoid. Binds to DNA and alters its conformation. May be involved in regulation of gene expression, nucleoid organization and DNA protection. This chain is Nucleoid-associated protein LBA0378, found in Lactobacillus acidophilus (strain ATCC 700396 / NCK56 / N2 / NCFM).